The chain runs to 290 residues: Agroclavine dehydrogenase (290 aa).

It belongs to the fgaFS/easG family. As to quaternary structure, monomer.

It catalyses the reaction agroclavine + NADP(+) = didehydroagroclavine + NADPH + H(+). The protein operates within alkaloid biosynthesis; ergot alkaloid biosynthesis. Agroclavine dehydrogenase; part of the gene cluster that mediates the biosynthesis of fungal ergot alkaloid. DmaW catalyzes the first step of ergot alkaloid biosynthesis by condensing dimethylallyl diphosphate (DMAP) and tryptophan to form 4-dimethylallyl-L-tryptophan. The second step is catalyzed by the methyltransferase easF that methylates 4-dimethylallyl-L-tryptophan in the presence of S-adenosyl-L-methionine, resulting in the formation of 4-dimethylallyl-L-abrine. The catalase easC and the FAD-dependent oxidoreductase easE then transform 4-dimethylallyl-L-abrine to chanoclavine-I which is further oxidized by easD in the presence of NAD(+), resulting in the formation of chanoclavine-I aldehyde. Agroclavine dehydrogenase easG then mediates the conversion of chanoclavine-I aldehyde to agroclavine via a non-enzymatic adduct reaction: the substrate is an iminium intermediate that is formed spontaneously from chanoclavine-I aldehyde in the presence of glutathione. The presence of easA is not required to complete this reaction. Further conversion of agroclavine to paspalic acid is a two-step process involving oxidation of agroclavine to elymoclavine and of elymoclavine to paspalic acid, the second step being performed by the elymoclavine oxidase cloA. Paspalic acid is then further converted to D-lysergic acid. Ergopeptines are assembled from D-lysergic acid and three different amino acids by the D-lysergyl-peptide-synthetases composed each of a monomudular and a trimodular nonribosomal peptide synthetase subunit. LpsB and lpsC encode the monomodular subunits responsible for D-lysergic acid activation and incorporation into the ergopeptine backbone. LpsA1 and A2 subunits encode the trimodular nonribosomal peptide synthetase assembling the tripeptide portion of ergopeptines. LpsA1 is responsible for formation of the major ergopeptine, ergotamine, and lpsA2 for alpha-ergocryptine, the minor ergopeptine of the total alkaloid mixture elaborated by C.purpurea. D-lysergyl-tripeptides are assembled by the nonribosomal peptide synthetases and released as N-(D-lysergyl-aminoacyl)-lactams. Cyclolization of the D-lysergyl-tripeptides is performed by the Fe(2+)/2-ketoglutarate-dependent dioxygenase easH which introduces a hydroxyl group into N-(D-lysergyl-aminoacyl)-lactam at alpha-C of the aminoacyl residue followed by spontaneous condensation with the terminal lactam carbonyl group. The polypeptide is Agroclavine dehydrogenase (Claviceps purpurea (strain 20.1) (Ergot fungus)).